Reading from the N-terminus, the 193-residue chain is Cytidylate kinase (193 aa).

ATP is bound at residue 12-20 (GLAGSGTTT).

Belongs to the cytidylate kinase family. Type 2 subfamily.

Its subcellular location is the cytoplasm. The enzyme catalyses CMP + ATP = CDP + ADP. It catalyses the reaction dCMP + ATP = dCDP + ADP. In Thermococcus sibiricus (strain DSM 12597 / MM 739), this protein is Cytidylate kinase.